A 108-amino-acid chain; its full sequence is Integration host factor subunit alpha (108 aa).

The protein belongs to the bacterial histone-like protein family. In terms of assembly, heterodimer of an alpha and a beta chain.

Functionally, this protein is one of the two subunits of integration host factor, a specific DNA-binding protein that functions in genetic recombination as well as in transcriptional and translational control. This chain is Integration host factor subunit alpha, found in Methylorubrum populi (strain ATCC BAA-705 / NCIMB 13946 / BJ001) (Methylobacterium populi).